The following is a 232-amino-acid chain: 5'-methylthioadenosine/S-adenosylhomocysteine nucleosidase (232 aa).

The Proton acceptor role is filled by Glu12. Substrate contacts are provided by residues Gly78, Ile152, and 173–174 (ME). Asp197 (proton donor) is an active-site residue.

This sequence belongs to the PNP/UDP phosphorylase family. MtnN subfamily. Homodimer.

It catalyses the reaction S-adenosyl-L-homocysteine + H2O = S-(5-deoxy-D-ribos-5-yl)-L-homocysteine + adenine. The enzyme catalyses S-methyl-5'-thioadenosine + H2O = 5-(methylsulfanyl)-D-ribose + adenine. It carries out the reaction 5'-deoxyadenosine + H2O = 5-deoxy-D-ribose + adenine. It functions in the pathway amino-acid biosynthesis; L-methionine biosynthesis via salvage pathway; S-methyl-5-thio-alpha-D-ribose 1-phosphate from S-methyl-5'-thioadenosine (hydrolase route): step 1/2. Its function is as follows. Catalyzes the irreversible cleavage of the glycosidic bond in both 5'-methylthioadenosine (MTA) and S-adenosylhomocysteine (SAH/AdoHcy) to adenine and the corresponding thioribose, 5'-methylthioribose and S-ribosylhomocysteine, respectively. Also cleaves 5'-deoxyadenosine, a toxic by-product of radical S-adenosylmethionine (SAM) enzymes, into 5-deoxyribose and adenine. Thus, is required for in vivo function of the radical SAM enzymes biotin synthase and lipoic acid synthase, that are inhibited by 5'-deoxyadenosine accumulation. The sequence is that of 5'-methylthioadenosine/S-adenosylhomocysteine nucleosidase from Shigella boydii serotype 4 (strain Sb227).